The chain runs to 160 residues: 6,7-dimethyl-8-ribityllumazine synthase (160 aa).

Residues tryptophan 27, 59–61 (AIE), and 81–83 (VVI) each bind 5-amino-6-(D-ribitylamino)uracil. Position 86 to 87 (86 to 87 (QT)) interacts with (2S)-2-hydroxy-3-oxobutyl phosphate. The Proton donor role is filled by histidine 89. Position 114 (asparagine 114) interacts with 5-amino-6-(D-ribitylamino)uracil. A (2S)-2-hydroxy-3-oxobutyl phosphate-binding site is contributed by arginine 128.

Belongs to the DMRL synthase family. In terms of assembly, homopentamer.

It catalyses the reaction (2S)-2-hydroxy-3-oxobutyl phosphate + 5-amino-6-(D-ribitylamino)uracil = 6,7-dimethyl-8-(1-D-ribityl)lumazine + phosphate + 2 H2O + H(+). The protein operates within cofactor biosynthesis; riboflavin biosynthesis; riboflavin from 2-hydroxy-3-oxobutyl phosphate and 5-amino-6-(D-ribitylamino)uracil: step 1/2. In terms of biological role, catalyzes the formation of 6,7-dimethyl-8-ribityllumazine by condensation of 5-amino-6-(D-ribitylamino)uracil with 3,4-dihydroxy-2-butanone 4-phosphate. This is the penultimate step in the biosynthesis of riboflavin. The protein is 6,7-dimethyl-8-ribityllumazine synthase of Mycobacterium sp. (strain JLS).